A 50-amino-acid polypeptide reads, in one-letter code: Photosystem II reaction center protein M (50 aa).

A helical membrane pass occupies residues 6-26; it reads FGFVASLLFVGVPTIFLIGLF.

Belongs to the PsbM family. PSII is composed of 1 copy each of membrane proteins PsbA, PsbB, PsbC, PsbD, PsbE, PsbF, PsbH, PsbI, PsbJ, PsbK, PsbL, PsbM, PsbT, PsbX, PsbY, Psb30/Ycf12, peripheral proteins PsbO, CyanoQ (PsbQ), PsbU, PsbV and a large number of cofactors. It forms dimeric complexes.

It localises to the cellular thylakoid membrane. Its function is as follows. One of the components of the core complex of photosystem II (PSII). PSII is a light-driven water:plastoquinone oxidoreductase that uses light energy to abstract electrons from H(2)O, generating O(2) and a proton gradient subsequently used for ATP formation. It consists of a core antenna complex that captures photons, and an electron transfer chain that converts photonic excitation into a charge separation. This subunit is found at the monomer-monomer interface. This is Photosystem II reaction center protein M from Prochlorococcus marinus (strain MIT 9215).